The sequence spans 364 residues: Fructose-bisphosphate aldolase B (364 aa).

Residue Ala2 is modified to N-acetylalanine. N6-succinyllysine is present on Lys13. A Phosphoserine modification is found at Ser36. A Phosphothreonine modification is found at Thr39. Position 43 (Arg43) interacts with beta-D-fructose 1,6-bisphosphate. Phosphoserine is present on Ser89. Thr119 is modified (phosphothreonine). Lys121 bears the N6-succinyllysine mark. Phosphoserine is present on Ser132. Glu188 acts as the Proton acceptor in catalysis. The active-site Schiff-base intermediate with dihydroxyacetone-P is the Lys230. Phosphoserine occurs at positions 272, 276, 299, and 301. Ser272–Gly274 serves as a coordination point for beta-D-fructose 1,6-bisphosphate. Arg304 is a binding site for beta-D-fructose 1,6-bisphosphate. The residue at position 309 (Ser309) is a Phosphoserine. Lys317 is subject to N6-succinyllysine.

It belongs to the class I fructose-bisphosphate aldolase family. In terms of assembly, homotetramer. Interacts with BBS1, BBS2, BBS4 and BBS7. Forms a ternary complex with G6PD and TP53; this interaction is direct.

Its subcellular location is the cytoplasm. The protein resides in the cytosol. It localises to the cytoskeleton. It is found in the microtubule organizing center. The protein localises to the centrosome. Its subcellular location is the centriolar satellite. It carries out the reaction beta-D-fructose 1,6-bisphosphate = D-glyceraldehyde 3-phosphate + dihydroxyacetone phosphate. It catalyses the reaction beta-D-fructose 1-phosphate = D-glyceraldehyde + dihydroxyacetone phosphate. It functions in the pathway carbohydrate degradation; glycolysis; D-glyceraldehyde 3-phosphate and glycerone phosphate from D-glucose: step 4/4. Its pathway is carbohydrate biosynthesis; gluconeogenesis. It participates in carbohydrate metabolism; fructose metabolism. In terms of biological role, catalyzes the aldol cleavage of fructose 1,6-biphosphate to form two triosephosphates dihydroxyacetone phosphate and D-glyceraldehyde 3-phosphate in glycolysis as well as the reverse stereospecific aldol addition reaction in gluconeogenesis. In fructolysis, metabolizes fructose 1-phosphate derived from the phosphorylation of dietary fructose by fructokinase into dihydroxyacetone phosphate and D-glyceraldehyde. Acts as an adapter independently of its enzymatic activity, exerts a tumor suppressor role by stabilizing the ternary complex with G6PD and TP53 to inhibit G6PD activity and keep oxidative pentose phosphate metabolism in check. The polypeptide is Fructose-bisphosphate aldolase B (Homo sapiens (Human)).